The chain runs to 381 residues: Bifunctional polyhydroxybutyrate synthase / ABC transporter periplasmic binding protein (381 aa).

A signal peptide spans 1–22 (MSKTFARSSLCALSMTIMTAHA).

Belongs to the bacterial solute-binding protein PotD/PotF family.

The protein localises to the periplasm. It carries out the reaction (3R)-3-hydroxybutanoyl-CoA + [(3R)-hydroxybutanoate](n) = [(3R)-hydroxybutanoate](n+1) + CoA. Catalyzes the formation of short polymers of R-3-hydroxybutyrate (cPHB). Involved in natural transformation. Probably part of the ABC transporter complex YdcSTUV. During natural transformation, may bind dsDNA and convey it to the inner membrane channel formed by YdcV. This is Bifunctional polyhydroxybutyrate synthase / ABC transporter periplasmic binding protein (ydcS) from Escherichia coli (strain K12).